We begin with the raw amino-acid sequence, 688 residues long: Amino-acid acetyltransferase, mitochondrial (688 aa).

The N-terminal 45 residues, 1–45, are a transit peptide targeting the mitochondrion; it reads MSSRALTWPRTAKSSLLKQQTSSFVGQPKLGTPNCRSFSSTADRP. 2 disordered regions span residues 1–59 and 96–119; these read MSSR…SKSY and LKAQ…TVTQ. 3 stretches are compositionally biased toward polar residues: residues 12 to 25, 34 to 57, and 106 to 119; these read AKSS…SSFV, NCRS…SSSK, and TEPT…TVTQ. The 170-residue stretch at 509–678 folds into the N-acetyltransferase domain; sequence NRPRLSLDDP…YEQVCRSIQP (170 aa).

It belongs to the acetyltransferase family.

It is found in the mitochondrion. The catalysed reaction is L-glutamate + acetyl-CoA = N-acetyl-L-glutamate + CoA + H(+). The protein operates within amino-acid biosynthesis; L-arginine biosynthesis; N(2)-acetyl-L-ornithine from L-glutamate: step 1/4. Functionally, N-acetylglutamate synthase involved in arginine biosynthesis. This Aspergillus flavus (strain ATCC 200026 / FGSC A1120 / IAM 13836 / NRRL 3357 / JCM 12722 / SRRC 167) protein is Amino-acid acetyltransferase, mitochondrial (arg2).